The chain runs to 952 residues: MTDTLDLKLSSRRQWNPVRCPVRLEVDGSAQTPTSLVQTALNNPSFDLVIAAPNGQNVYIPFTEDRKLFTANIADDPSTSSLISHCHFEGVTEDGRHALSLCDPGEITGLLMTQTNRFGLSTSNNGSFVLIPYVENNCDLGSLVHSSSRKKRQIGKQNTVIDRNPSYIREHLDGRKRFVELALVADYSVYTKYDSDEKKVNDYMQQTMNILNSLYFPLNIRITLVHSEIWKKGDQISVIPDSKETLNNFMEYKKIMLKDHFFDTGYLMTTLKFDEGVVGKAYKGTMCSYDYSGGIYVDHNNDTVETVATFAHELGHTFGMDHDPNDKDVCYCPMPRCIMNPQSGHMEVWSECSVKNLASGFNRGIDLCLFNEPGKKPSDAKCGNGIVEPGEECDCGPLKCDNHCCNGSTCKLIGEAECASGDCCDLKTCKPKPRATVCRAAIGICDLDEYCNGETNDCPADFFVQNAALCPGKENEFCYEGGCGSRNDQCAKLWGPTGKNGDENCYRKNTEGTFHGNCGTNAHTKEIKKCETENAKCGLLQCETQAERPVFGDPGSVTFSHSTVYSSLKRDDKKFCYVFKSAYGGLNAPDPGLVPDGAICGEEQMCIGQKCHKKEKISKVTAQCLDNCNFRGVCNNVGNCHCERGFGGIACEIPGYGGSVNSNEAYRFRGITLSSTFLVFFCLFGIFIGGLCVYYRVKRKRNLVSEWWSVVKKKFDLHGDLVPVRKAPPPPYAQRIRQSFTAMWGEDHSHVAVAQPAHPRNCYNSCCRQPPRFDPPSIPMVTLKNPNLASPTPLLNPAEKEEQNQERATHQHVELYPVAESFRSDSAASFNTRTGSFRPNVQPPPVPRPSDDVLSKLNEDLAKEKNAKFDRLNKTLPLPPPLPKEKPKTASSTSLRRNESIRPEQAPPPPPPAHAKPTLPTKQPKVSEDAAATEEKVDVRSMAAIFDQKLKK.

Topologically, residues 1–672 (MTDTLDLKLS…NEAYRFRGIT (672 aa)) are extracellular. N-linked (GlcNAc...) asparagine glycans are attached at residues N125 and N301. The Peptidase M12B domain occupies 177 to 373 (RFVELALVAD…GIDLCLFNEP (197 aa)). 3 disulfides stabilise this stretch: C287–C368, C330–C352, and C332–C337. Zn(2+) is bound at residue H312. The active site involves E313. Residues H316 and H322 each coordinate Zn(2+). In terms of domain architecture, Disintegrin spans 379 to 466 (DAKCGNGIVE…DCPADFFVQN (88 aa)). N406 carries an N-linked (GlcNAc...) asparagine glycan. 4 disulfide bridges follow: C438-C458, C624-C634, C628-C640, and C642-C651. In terms of domain architecture, EGF-like spans 620 to 652 (VTAQCLDNCNFRGVCNNVGNCHCERGFGGIACE). A helical membrane pass occupies residues 673–693 (LSSTFLVFFCLFGIFIGGLCV). Topologically, residues 694 to 952 (YYRVKRKRNL…AAIFDQKLKK (259 aa)) are cytoplasmic. Disordered regions lie at residues 778 to 809 (IPMVTLKNPNLASPTPLLNPAEKEEQNQERAT) and 829 to 938 (SFNT…EKVD). Composition is skewed to basic and acidic residues over residues 798 to 809 (AEKEEQNQERAT) and 849 to 873 (PSDDVLSKLNEDLAKEKNAKFDRLN). A compositionally biased stretch (pro residues) spans 905–914 (QAPPPPPPAH). Positions 925–938 (KVSEDAAATEEKVD) are enriched in basic and acidic residues.

The cofactor is Zn(2+). As to expression, expressed in hyp7 large epidermal syncytium (punctate distribution), seam cell syncytia, anterior epidermis, neurons located in the head, tail and central body, proximal oogenic cells (levels increasing in maturing oocytes) and myoepithelial cells of the spermatheca (at protein level). Not detected in mature sperm cells.

It localises to the cell membrane. The protein localises to the endosome membrane. The protein resides in the lysosome membrane. Its function is as follows. Metalloprotease that cleaves and releases a number of molecules. Negative regulator of lrp-1 protein levels, potentially by influencing its endosomal trafficking. Involved in regulating the molting process. In Caenorhabditis elegans, this protein is Disintegrin and metalloproteinase domain-containing protein adm-2.